A 348-amino-acid polypeptide reads, in one-letter code: D-alanine--D-alanine ligase (348 aa).

Residues 132-334 (KRVLESIGIP…YPDLIEELVT (203 aa)) form the ATP-grasp domain. 162–217 (LARLTFPIFVKPANMGSSVGISKAQTKVELRKAIQLALTYDSRVLIEQGVVAREIE) provides a ligand contact to ATP. Mg(2+) is bound by residues Asp-288, Glu-301, and Asn-303.

The protein belongs to the D-alanine--D-alanine ligase family. It depends on Mg(2+) as a cofactor. Mn(2+) is required as a cofactor.

It localises to the cytoplasm. The enzyme catalyses 2 D-alanine + ATP = D-alanyl-D-alanine + ADP + phosphate + H(+). The protein operates within cell wall biogenesis; peptidoglycan biosynthesis. Cell wall formation. The polypeptide is D-alanine--D-alanine ligase (Streptococcus pyogenes serotype M18 (strain MGAS8232)).